The sequence spans 230 residues: Cell division ATP-binding protein FtsE (230 aa).

The 226-residue stretch at 4–229 folds into the ABC transporter domain; that stretch reads IEMRDVVKKY…DESKGEYGYD (226 aa). 37–44 is a binding site for ATP; that stretch reads GPSGAGKS.

This sequence belongs to the ABC transporter superfamily. In terms of assembly, homodimer. Interacts with FtsX; forms a membrane-associated complex. Interacts with pcsB.

The protein localises to the cell membrane. It catalyses the reaction ATP + H2O = ADP + phosphate + H(+). In terms of biological role, part of the ABC transporter FtsEX involved in cellular division. Has ATPase activity. Essential for cell division and viability. This is Cell division ATP-binding protein FtsE from Streptococcus pneumoniae serotype 2 (strain D39 / NCTC 7466).